We begin with the raw amino-acid sequence, 164 residues long: UPF0305 protein MJ0646 (164 aa).

It belongs to the UPF0305 family.

In Methanocaldococcus jannaschii (strain ATCC 43067 / DSM 2661 / JAL-1 / JCM 10045 / NBRC 100440) (Methanococcus jannaschii), this protein is UPF0305 protein MJ0646.